The primary structure comprises 90 residues: Co-chaperonin GroES (90 aa).

Belongs to the GroES chaperonin family. As to quaternary structure, heptamer of 7 subunits arranged in a ring. Interacts with the chaperonin GroEL.

It localises to the cytoplasm. Together with the chaperonin GroEL, plays an essential role in assisting protein folding. The GroEL-GroES system forms a nano-cage that allows encapsulation of the non-native substrate proteins and provides a physical environment optimized to promote and accelerate protein folding. GroES binds to the apical surface of the GroEL ring, thereby capping the opening of the GroEL channel. The sequence is that of Co-chaperonin GroES from Thermosipho africanus (strain TCF52B).